The following is a 135-amino-acid chain: Large ribosomal subunit protein eL32 (135 aa).

It belongs to the eukaryotic ribosomal protein eL32 family. As to quaternary structure, component of the large ribosomal subunit.

The protein resides in the cytoplasm. In terms of biological role, component of the large ribosomal subunit. The ribosome is a large ribonucleoprotein complex responsible for the synthesis of proteins in the cell. In Ictalurus punctatus (Channel catfish), this protein is Large ribosomal subunit protein eL32 (rpl32).